The sequence spans 1115 residues: DNA-directed RNA polymerase subunit beta (1115 aa).

The segment at 1084–1115 is disordered; sequence HEAGEGEDDEYFEEDEEAVDDEPMTFDDDDME. Acidic residues predominate over residues 1088-1115; it reads EGEDDEYFEEDEEAVDDEPMTFDDDDME.

Belongs to the RNA polymerase beta chain family. The RNAP catalytic core consists of 2 alpha, 1 beta, 1 beta' and 1 omega subunit. When a sigma factor is associated with the core the holoenzyme is formed, which can initiate transcription.

The enzyme catalyses RNA(n) + a ribonucleoside 5'-triphosphate = RNA(n+1) + diphosphate. In terms of biological role, DNA-dependent RNA polymerase catalyzes the transcription of DNA into RNA using the four ribonucleoside triphosphates as substrates. This is DNA-directed RNA polymerase subunit beta from Desulfitobacterium hafniense (strain Y51).